The sequence spans 824 residues: Ent-copalyl diphosphate synthase AN1, chloroplastic (824 aa).

The N-terminal 63 residues, 1–63 (MPYPHPYPWQ…SSAKVFQTSR (63 aa)), are a transit peptide targeting the chloroplast. The segment at 1 to 87 (MPYPHPYPWQ…QDLEDEHQAE (87 aa)) is disordered. Residues 44 to 63 (ATTTQQPDNVSSAKVFQTSR) show a composition bias toward polar residues. Lys247 is a substrate binding site. Mg(2+) contacts are provided by Asp379 and Asp381. The short motif at 379 to 382 (DVDD) is the DXDD motif element. Position 465 (Lys465) interacts with substrate.

This sequence belongs to the terpene synthase family. Tpsc subfamily. Mg(2+) serves as cofactor.

It localises to the plastid. It is found in the chloroplast. It catalyses the reaction (2E,6E,10E)-geranylgeranyl diphosphate = ent-copalyl diphosphate. It functions in the pathway plant hormone biosynthesis; gibberellin biosynthesis. Its function is as follows. Involved in giberellin biosynthesis. Catalyzes the conversion of geranylgeranyl diphosphate to the gibberellin precursor ent-copalyl diphosphate. This Zea mays (Maize) protein is Ent-copalyl diphosphate synthase AN1, chloroplastic.